The chain runs to 483 residues: SET domain and MYND-type zinc finger protein 6 (483 aa).

The region spanning 4–228 (PLIASVILPE…KDEQLFISYI (225 aa)) is the SET domain. Positions 49, 52, 62, 65, 71, 75, 83, and 87 each coordinate Zn(2+). Residues 49 to 87 (CSTCTEEKVKTQRCAACKIIHYCSKGCQKADWPFHKLEC) form an MYND-type zinc finger.

Belongs to the class V-like SAM-binding methyltransferase superfamily.

It localises to the cytoplasm. The protein localises to the nucleus. This is SET domain and MYND-type zinc finger protein 6 (set6) from Schizosaccharomyces pombe (strain 972 / ATCC 24843) (Fission yeast).